The following is a 248-amino-acid chain: Granulin (248 aa).

It belongs to the polyhedrin family.

Its function is as follows. Component of the virus occlusion bodies, which are large proteinaceous structures, that protect the virus from the outside environment for extended periods until they are ingested by insect larvae. The chain is Granulin from Adoxophyes orana granulovirus (AoGV).